The following is a 729-amino-acid chain: Fatty acid oxidation complex subunit alpha (729 aa).

Positions 1 to 189 are enoyl-CoA hydratase/isomerase; the sequence is MLYQSETLQL…KIGLVDAVVD (189 aa). Asp296 contacts substrate. Positions 311–729 are 3-hydroxyacyl-CoA dehydrogenase; sequence AAPKLAAVLG…LLDVSTNQPA (419 aa). NAD(+)-binding positions include Met324, Asp343, 400 to 402, Lys407, and Ser429; that span reads VVE. Catalysis depends on His450, which acts as the For 3-hydroxyacyl-CoA dehydrogenase activity. Residue Asn453 participates in NAD(+) binding. The substrate site is built by Asn500 and Tyr660.

In the N-terminal section; belongs to the enoyl-CoA hydratase/isomerase family. It in the C-terminal section; belongs to the 3-hydroxyacyl-CoA dehydrogenase family. As to quaternary structure, heterotetramer of two alpha chains (FadB) and two beta chains (FadA).

It carries out the reaction a (3S)-3-hydroxyacyl-CoA + NAD(+) = a 3-oxoacyl-CoA + NADH + H(+). The catalysed reaction is a (3S)-3-hydroxyacyl-CoA = a (2E)-enoyl-CoA + H2O. It catalyses the reaction a 4-saturated-(3S)-3-hydroxyacyl-CoA = a (3E)-enoyl-CoA + H2O. The enzyme catalyses (3S)-3-hydroxybutanoyl-CoA = (3R)-3-hydroxybutanoyl-CoA. It carries out the reaction a (3Z)-enoyl-CoA = a 4-saturated (2E)-enoyl-CoA. The catalysed reaction is a (3E)-enoyl-CoA = a 4-saturated (2E)-enoyl-CoA. It participates in lipid metabolism; fatty acid beta-oxidation. Involved in the aerobic and anaerobic degradation of long-chain fatty acids via beta-oxidation cycle. Catalyzes the formation of 3-oxoacyl-CoA from enoyl-CoA via L-3-hydroxyacyl-CoA. It can also use D-3-hydroxyacyl-CoA and cis-3-enoyl-CoA as substrate. The sequence is that of Fatty acid oxidation complex subunit alpha from Yersinia pseudotuberculosis serotype IB (strain PB1/+).